Here is a 160-residue protein sequence, read N- to C-terminus: Archaemetzincin (160 aa).

Histidine 117 contributes to the Zn(2+) binding site. Catalysis depends on glutamate 118, which acts as the Proton acceptor. Histidine 121, histidine 127, cysteine 128, cysteine 132, cysteine 151, and cysteine 154 together coordinate Zn(2+).

Belongs to the peptidase M54 family. As to quaternary structure, monomer. Requires Zn(2+) as cofactor.

In terms of biological role, probable zinc metalloprotease whose natural substrate is unknown. This Archaeoglobus fulgidus (strain ATCC 49558 / DSM 4304 / JCM 9628 / NBRC 100126 / VC-16) protein is Archaemetzincin.